A 136-amino-acid polypeptide reads, in one-letter code: MSIKQMPGRVLISLLLSVTGLLSGCASHNENASLLAKKQAQNISQNLPIKSAGYTLVLAQSSGTTVKMTIISEAGTQTTQTPDAFLTSYQRQMCADPTVKLMLTEGINYSITINDTRTGNQYQRKLDRTTCGIVKA.

The first 24 residues, 1–24 (MSIKQMPGRVLISLLLSVTGLLSG), serve as a signal peptide directing secretion. Cys25 carries the N-palmitoyl cysteine lipid modification. Cys25 carries the S-diacylglycerol cysteine lipid modification. Cys94 and Cys131 are disulfide-bonded.

This sequence belongs to the GspS/AspS pilotin family. Cryo-electron microscopy shows that the complex forms a cylindrical channel with 15 GspD2 subunits, each of which interacts with its surrounding AspS2 (GspS-beta).

The protein resides in the cell outer membrane. Its function is as follows. Part of a type II secretion system (T2SS, formerly general secretion pathway, GSP) for the export of folded proteins across the outer membrane. Required for correct assembly of the type II secretion system-beta (T2SS-beta), for localization of GspD-beta to the cell outer membrane and for export of a labile enterotoxin by T2SS-beta. Each AspS2 binds to 2 GspD2 subunits and may clamp the monomers together, stabilizing structure and accelerating its assembly. This chain is Pilotin AspS 2, found in Escherichia coli O78:H11 (strain H10407 / ETEC).